The primary structure comprises 189 residues: UPF0301 protein PLES_04031 (189 aa).

Belongs to the UPF0301 (AlgH) family.

The chain is UPF0301 protein PLES_04031 from Pseudomonas aeruginosa (strain LESB58).